The chain runs to 494 residues: UPF0371 protein spyM18_1356 (494 aa).

Belongs to the UPF0371 family.

In Streptococcus pyogenes serotype M18 (strain MGAS8232), this protein is UPF0371 protein spyM18_1356.